A 469-amino-acid polypeptide reads, in one-letter code: Ribulose bisphosphate carboxylase large chain (469 aa).

Position 5 is an N6,N6,N6-trimethyllysine (Lys-5). 2 residues coordinate substrate: Asn-114 and Thr-164. The active-site Proton acceptor is Lys-166. Lys-168 lines the substrate pocket. Lys-192, Asp-194, and Glu-195 together coordinate Mg(2+). Lys-192 carries the N6-carboxylysine modification. The active-site Proton acceptor is His-285. Residues Arg-286, His-318, and Ser-370 each contribute to the substrate site.

The protein belongs to the RuBisCO large chain family. Type I subfamily. As to quaternary structure, heterohexadecamer of 8 large chains and 8 small chains; disulfide-linked. The disulfide link is formed within the large subunit homodimers. Mg(2+) serves as cofactor. The disulfide bond which can form in the large chain dimeric partners within the hexadecamer appears to be associated with oxidative stress and protein turnover.

Its subcellular location is the plastid. It localises to the chloroplast. The enzyme catalyses 2 (2R)-3-phosphoglycerate + 2 H(+) = D-ribulose 1,5-bisphosphate + CO2 + H2O. It catalyses the reaction D-ribulose 1,5-bisphosphate + O2 = 2-phosphoglycolate + (2R)-3-phosphoglycerate + 2 H(+). Functionally, ruBisCO catalyzes two reactions: the carboxylation of D-ribulose 1,5-bisphosphate, the primary event in carbon dioxide fixation, as well as the oxidative fragmentation of the pentose substrate in the photorespiration process. Both reactions occur simultaneously and in competition at the same active site. The chain is Ribulose bisphosphate carboxylase large chain from Calycophyllum candidissimum (Degame lemonwood tree).